We begin with the raw amino-acid sequence, 338 residues long: Glycerol-3-phosphate dehydrogenase [NAD(P)+] (338 aa).

Residues Ser13, Trp14, and Lys108 each contribute to the NADPH site. Positions 108, 139, and 141 each coordinate sn-glycerol 3-phosphate. Ala143 provides a ligand contact to NADPH. The sn-glycerol 3-phosphate site is built by Lys194, Asp247, Ser257, Arg258, and Asn259. The active-site Proton acceptor is the Lys194. Arg258 lines the NADPH pocket. 2 residues coordinate NADPH: Val282 and Glu284.

Belongs to the NAD-dependent glycerol-3-phosphate dehydrogenase family.

It is found in the cytoplasm. It catalyses the reaction sn-glycerol 3-phosphate + NAD(+) = dihydroxyacetone phosphate + NADH + H(+). The catalysed reaction is sn-glycerol 3-phosphate + NADP(+) = dihydroxyacetone phosphate + NADPH + H(+). The protein operates within membrane lipid metabolism; glycerophospholipid metabolism. Catalyzes the reduction of the glycolytic intermediate dihydroxyacetone phosphate (DHAP) to sn-glycerol 3-phosphate (G3P), the key precursor for phospholipid synthesis. This is Glycerol-3-phosphate dehydrogenase [NAD(P)+] from Streptococcus pneumoniae (strain CGSP14).